The following is a 108-amino-acid chain: UPF0145 protein THA_1434 (108 aa).

Belongs to the UPF0145 family.

The polypeptide is UPF0145 protein THA_1434 (Thermosipho africanus (strain TCF52B)).